Reading from the N-terminus, the 422-residue chain is Histidine--tRNA ligase (422 aa).

It belongs to the class-II aminoacyl-tRNA synthetase family. As to quaternary structure, homodimer.

It is found in the cytoplasm. The enzyme catalyses tRNA(His) + L-histidine + ATP = L-histidyl-tRNA(His) + AMP + diphosphate + H(+). The chain is Histidine--tRNA ligase from Onion yellows phytoplasma (strain OY-M).